A 265-amino-acid polypeptide reads, in one-letter code: MEMO1 family protein Mbar_A1422 (265 aa).

Belongs to the MEMO1 family.

This is MEMO1 family protein Mbar_A1422 from Methanosarcina barkeri (strain Fusaro / DSM 804).